Consider the following 139-residue polypeptide: uncharacterized protein (139 aa).

Helical transmembrane passes span 35–55 (LVFL…SFLI) and 57–77 (FGIL…LTVI).

Its subcellular location is the membrane. This is an uncharacterized protein from Saccharomyces cerevisiae (strain ATCC 204508 / S288c) (Baker's yeast).